We begin with the raw amino-acid sequence, 1433 residues long: MAFRKENKIKNNFSKIRITLASPEEILENSFGEVLKPETINYRTYKPERDGLFCERIFGPVKDFECHCGKYKRIRYRGIVCDRCGVEVTEKKVRRERMGHIHLVVPVAHIWYFRSLPNKIGYLLGLPTKKLDAIIYYERYVVIQPGVAEGLSQLDLLSEEEYLDKLDEIERTHKGNQNLEDTNPDKFIAKIGAEAIYDLLCRVDLDSISYELRDRANTDGSQQRKTEALKRLQVVESFRASKGVNRPEWMVMKVIPVIPPDLRPLVPLDGGRFATSDLNDLYRRVIIRNNRLKRLIEIKAPEVILRNEKRMLQEAVDSLFDNSRKSSAVKSDNNRPLKSLSDSLKGKQGRFRQNLLGKRVDYSARSVIVVGPELKMHECGLPKDMAAELYKPFIIRKLIERGIVKTVKSAKKIVDRKEPVIWDILEYVMKGHPVLLNRAPTLHRLGIQAFQPKLIEGKAIQLHPLSCTAFNADFDGDQMAVHLPLSNEAILEAQLLMLASHNILNPANGAPITVPSQDMVLGLYYITKLRPNIKGHGLIFYGPEEATIAYNEGKVDIHAPIKVYVEDYENGELVRRMVETSVGRLMVNEYVPKKVGYVNEVLGKKALRDIIGSVIKICGVATTAKFLDDIKNLGYYMAFKGGLSFNLADVLIPDEKDQLIQEGYTAVEQIMQDYSMGFITFNERYNQIIDTWTHINGRLSNVLIKQLSSDNDGFNSVFMMMDSGARGSKEQIRQLSGMRGLMAKPQKSGAEGGQIIENPILSNFKEGLSVLEYFISTHGARKGLADTALKTADAGYLTRRLVDVSHDVIITEEDCGTLRGLLTTELKQNEDVVASLYERILGRVSVHDIIHPTTGDIIVRAGEEIREQAAQIIEDSPIEAVEIRSVLTCESKKGVCAKCYGRNLATNRMVQRGEVVGVIAAQSIGEPGTQLTLRTFHVGGIASNVATENSLLSKYDGILEFEELRAVDATDESHQVVVSRMTELRIADPNTGIILANHNIPYGAKLFFRQGDAVKKGDKIIEWDPFNAVIVSEVAGTLSFEGVVENVTFKMESDETTGLKEKIIIESKDKTMAPYARIIDENGEMLKNYSLPMGAHVVKDDGDTVKVGEILVKIPRSVGKAGDITGGLPRVTELFEARNPSNPAIVSEIDGEIGFGKLKRGNREITVTSKLGEEKKYLIPLSKQLLVQENDFVRAGTPLSDGAITPADILAIKGPTAVQEYIVNEVQDVYRLQGVKINDKHFEVIVRQMMRKVEIVDPGDTLFLEQQVVDKFEVMEENDRIWGKKVVIDAGDSQVLKAGQIVTARKLRDENSMLKRKDLKIVKVRDAKSATASQILQGITRAALQTKSFMSAASFQETTKVLNEAAICGKTDYLEGLKENVICGHLIPAGTGLRDYEKLVVMHRDDYEKATAERKSFLSVPTAEPAMEEAPSE.

Zn(2+) contacts are provided by C66, C68, C81, and C84. Mg(2+) contacts are provided by D473, D475, and D477. Residues C815, C889, C896, and C899 each coordinate Zn(2+).

This sequence belongs to the RNA polymerase beta' chain family. The RNAP catalytic core consists of 2 alpha, 1 beta, 1 beta' and 1 omega subunit. When a sigma factor is associated with the core the holoenzyme is formed, which can initiate transcription. The cofactor is Mg(2+). It depends on Zn(2+) as a cofactor.

The enzyme catalyses RNA(n) + a ribonucleoside 5'-triphosphate = RNA(n+1) + diphosphate. Its function is as follows. DNA-dependent RNA polymerase catalyzes the transcription of DNA into RNA using the four ribonucleoside triphosphates as substrates. In Porphyromonas gingivalis (strain ATCC 33277 / DSM 20709 / CIP 103683 / JCM 12257 / NCTC 11834 / 2561), this protein is DNA-directed RNA polymerase subunit beta'.